The chain runs to 208 residues: Probable GTP-binding protein EngB (208 aa).

Residues 25-199 enclose the EngB-type G domain; it reads TGIEVAFAGR…RQKLDSWYNG (175 aa). GTP contacts are provided by residues 33-40, 60-64, 78-81, 145-148, and 178-180; these read GRSNAGKS, GRTQL, DLPG, TKSD, and FSS. Residues Ser40 and Thr62 each contribute to the Mg(2+) site.

Belongs to the TRAFAC class TrmE-Era-EngA-EngB-Septin-like GTPase superfamily. EngB GTPase family. It depends on Mg(2+) as a cofactor.

Its function is as follows. Necessary for normal cell division and for the maintenance of normal septation. The protein is Probable GTP-binding protein EngB of Enterobacter sp. (strain 638).